Reading from the N-terminus, the 314-residue chain is Melanoma-associated antigen 6 (314 aa).

A compositionally biased stretch (basic and acidic residues) spans 1–20 (MPLEQRSQHCKPEEGLEARG). The interval 1–99 (MPLEQRSQHC…QEEEGPSTFP (99 aa)) is disordered. Over residues 21–44 (EALGLVGAQAPATEEQEAASSSST) the composition is skewed to low complexity. Residues 65–87 (PQGASSLPTTMNYPLWSQSYEDS) are compositionally biased toward polar residues. The MAGE domain maps to 109–308 (LSRKVAKLVH…ISYPLLHEWA (200 aa)).

As to quaternary structure, interacts with TRIM28. Post-translationally, ubiquitinated by the DCX(DCAF12) complex specifically recognizes the diglutamate (Glu-Glu) at the C-terminus, leading to its degradation. As to expression, expressed in many tumors of several types, such as melanoma, head and neck squamous cell carcinoma, lung carcinoma and breast carcinoma, but not in normal tissues except for testes.

Its function is as follows. Activator of ubiquitin ligase activity of RING-type zinc finger-containing E3 ubiquitin-protein ligases that acts as a repressor of autophagy. May enhance ubiquitin ligase activity of TRIM28 and stimulate p53/TP53 ubiquitination by TRIM28. Proposed to act through recruitment and/or stabilization of the Ubl-conjugating enzyme (E2) at the E3:substrate complex. May play a role in tumor transformation or aspects of tumor progression. In vitro promotes cell viability in melanoma cell lines. In Homo sapiens (Human), this protein is Melanoma-associated antigen 6.